The following is a 227-amino-acid chain: Cytochrome c oxidase subunit 2 (227 aa).

The Mitochondrial intermembrane segment spans residues M1 to S14. The helical transmembrane segment at P15–T45 threads the bilayer. The Mitochondrial matrix segment spans residues L46–Q59. A helical transmembrane segment spans residues E60 to T87. Residues D88–L227 lie on the Mitochondrial intermembrane side of the membrane. Cu cation is bound by residues H161, C196, E198, C200, H204, and M207. A Mg(2+)-binding site is contributed by E198.

It belongs to the cytochrome c oxidase subunit 2 family. As to quaternary structure, component of the cytochrome c oxidase (complex IV, CIV), a multisubunit enzyme composed of 14 subunits. The complex is composed of a catalytic core of 3 subunits MT-CO1, MT-CO2 and MT-CO3, encoded in the mitochondrial DNA, and 11 supernumerary subunits COX4I, COX5A, COX5B, COX6A, COX6B, COX6C, COX7A, COX7B, COX7C, COX8 and NDUFA4, which are encoded in the nuclear genome. The complex exists as a monomer or a dimer and forms supercomplexes (SCs) in the inner mitochondrial membrane with NADH-ubiquinone oxidoreductase (complex I, CI) and ubiquinol-cytochrome c oxidoreductase (cytochrome b-c1 complex, complex III, CIII), resulting in different assemblies (supercomplex SCI(1)III(2)IV(1) and megacomplex MCI(2)III(2)IV(2)). Found in a complex with TMEM177, COA6, COX18, COX20, SCO1 and SCO2. Interacts with TMEM177 in a COX20-dependent manner. Interacts with COX20. Interacts with COX16. It depends on Cu cation as a cofactor.

The protein localises to the mitochondrion inner membrane. It carries out the reaction 4 Fe(II)-[cytochrome c] + O2 + 8 H(+)(in) = 4 Fe(III)-[cytochrome c] + 2 H2O + 4 H(+)(out). Functionally, component of the cytochrome c oxidase, the last enzyme in the mitochondrial electron transport chain which drives oxidative phosphorylation. The respiratory chain contains 3 multisubunit complexes succinate dehydrogenase (complex II, CII), ubiquinol-cytochrome c oxidoreductase (cytochrome b-c1 complex, complex III, CIII) and cytochrome c oxidase (complex IV, CIV), that cooperate to transfer electrons derived from NADH and succinate to molecular oxygen, creating an electrochemical gradient over the inner membrane that drives transmembrane transport and the ATP synthase. Cytochrome c oxidase is the component of the respiratory chain that catalyzes the reduction of oxygen to water. Electrons originating from reduced cytochrome c in the intermembrane space (IMS) are transferred via the dinuclear copper A center (CU(A)) of subunit 2 and heme A of subunit 1 to the active site in subunit 1, a binuclear center (BNC) formed by heme A3 and copper B (CU(B)). The BNC reduces molecular oxygen to 2 water molecules using 4 electrons from cytochrome c in the IMS and 4 protons from the mitochondrial matrix. The protein is Cytochrome c oxidase subunit 2 (MT-CO2) of Papio anubis (Olive baboon).